A 507-amino-acid chain; its full sequence is Mandelamide hydrolase (507 aa).

Residues Lys100 and Ser180 each act as charge relay system in the active site. The active-site Acyl-ester intermediate is the Ser204.

As to quaternary structure, monomer.

It carries out the reaction (R)-mandelamide + H2O = (R)-mandelate + NH4(+). Inhibited by 3,4-dichloroisocoumarin and PMSF. Hydrolyzes both the R- and the S-enantiomers of mandelamide, and phenylacetamide. Has lower activity on 3-phenylpropionaide and lactamide. Does not hydrolyze benzamide. Hydrolyzes esters and amides with little steric bulk. Preferentially hydrolyzes aromatic substrates. The chain is Mandelamide hydrolase from Pseudomonas putida (Arthrobacter siderocapsulatus).